A 548-amino-acid chain; its full sequence is ATP synthase subunit alpha (548 aa).

ATP is bound at residue 172–179 (GDRKTGKT).

Belongs to the ATPase alpha/beta chains family. In terms of assembly, F-type ATPases have 2 components, CF(1) - the catalytic core - and CF(0) - the membrane proton channel. CF(1) has five subunits: alpha(3), beta(3), gamma(1), delta(1), epsilon(1). CF(0) has three main subunits: a(1), b(2) and c(9-12). The alpha and beta chains form an alternating ring which encloses part of the gamma chain. CF(1) is attached to CF(0) by a central stalk formed by the gamma and epsilon chains, while a peripheral stalk is formed by the delta and b chains.

The protein localises to the cell membrane. The catalysed reaction is ATP + H2O + 4 H(+)(in) = ADP + phosphate + 5 H(+)(out). Its function is as follows. Produces ATP from ADP in the presence of a proton gradient across the membrane. The alpha chain is a regulatory subunit. This chain is ATP synthase subunit alpha, found in Mycolicibacterium smegmatis (strain ATCC 700084 / mc(2)155) (Mycobacterium smegmatis).